We begin with the raw amino-acid sequence, 265 residues long: Mlc titration factor A (265 aa).

Zn(2+) is bound by residues H111, H148, H152, and E211.

The protein belongs to the MtfA family. Interacts with Mlc. Zn(2+) is required as a cofactor.

Its subcellular location is the cytoplasm. In terms of biological role, involved in the modulation of the activity of the glucose-phosphotransferase system (glucose-PTS). Interacts with the transcriptional repressor Mlc, preventing its interaction with DNA and leading to the modulation of expression of genes regulated by Mlc, including ptsG, which encodes the PTS system glucose-specific EIICB component. Its function is as follows. Shows zinc-dependent metallopeptidase activity. This chain is Mlc titration factor A, found in Escherichia coli O17:K52:H18 (strain UMN026 / ExPEC).